The primary structure comprises 554 residues: Raftlin (554 aa).

Gly2 carries the N-myristoyl glycine lipid modification. Cys3 carries the S-palmitoyl cysteine lipid modification. Phosphoserine is present on residues Ser183 and Ser199. Disordered regions lie at residues 192–249 (CTLG…NEAG), 441–488 (KKRE…DQFS), and 504–554 (GRAS…TEAN). 2 stretches are compositionally biased toward basic and acidic residues: residues 198–209 (SSLENDTPKAAE) and 475–487 (QAEENEKNLEDQF). 2 positions are modified to phosphoserine: Ser507 and Ser530. The span at 526-542 (HNRDSVALRHSNPRAEA) shows a compositional bias: basic and acidic residues.

The protein belongs to the raftlin family. As to quaternary structure, interacts with TLR4; the interaction occurs in response to lipopolysaccharide stimulation. Interacts with CLTC; the interaction occurs in response to pathogens. Interacts with AP2A1 and AP2B1. In terms of tissue distribution, expressed in T-cells, B-cells, thymus and spleen (at protein level). Expressed in dendritic cells, macrophages, heart, lung and small intestine.

It is found in the cell membrane. Its subcellular location is the cytoplasm. It localises to the membrane raft. The protein localises to the endosome. The protein resides in the early endosome. Functionally, involved in protein trafficking via association with clathrin and AP2 complex. Upon bacterial lipopolysaccharide stimulation, mediates internalization of TLR4 to endosomes in dendritic cells and macrophages, and internalization of poly(I:C) to TLR3-positive endosomes in myeloid dendritic cells and epithelial cells; resulting in activation of TICAM1-mediated signaling and subsequent IFNB1 production. Involved in T-cell antigen receptor-mediated signaling by regulating tyrosine kinase LCK localization, T-cell dependent antibody production and cytokine secretion. May regulate B-cell antigen receptor-mediated signaling. May play a pivotal role in the formation and/or maintenance of lipid rafts. The polypeptide is Raftlin (Rftn1) (Mus musculus (Mouse)).